Here is a 352-residue protein sequence, read N- to C-terminus: UDP-N-acetylglucosamine--N-acetylmuramyl-(pentapeptide) pyrophosphoryl-undecaprenol N-acetylglucosamine transferase (352 aa).

UDP-N-acetyl-alpha-D-glucosamine contacts are provided by serine 195 and glutamine 287.

The protein belongs to the glycosyltransferase 28 family. MurG subfamily.

It localises to the cell membrane. It catalyses the reaction Mur2Ac(oyl-L-Ala-gamma-D-Glu-L-Lys-D-Ala-D-Ala)-di-trans,octa-cis-undecaprenyl diphosphate + UDP-N-acetyl-alpha-D-glucosamine = beta-D-GlcNAc-(1-&gt;4)-Mur2Ac(oyl-L-Ala-gamma-D-Glu-L-Lys-D-Ala-D-Ala)-di-trans,octa-cis-undecaprenyl diphosphate + UDP + H(+). It participates in cell wall biogenesis; peptidoglycan biosynthesis. Cell wall formation. Catalyzes the transfer of a GlcNAc subunit on undecaprenyl-pyrophosphoryl-MurNAc-pentapeptide (lipid intermediate I) to form undecaprenyl-pyrophosphoryl-MurNAc-(pentapeptide)GlcNAc (lipid intermediate II). In Streptococcus pneumoniae (strain CGSP14), this protein is UDP-N-acetylglucosamine--N-acetylmuramyl-(pentapeptide) pyrophosphoryl-undecaprenol N-acetylglucosamine transferase.